Reading from the N-terminus, the 598-residue chain is Dihydroxy-acid dehydratase astD, mitochondrial (598 aa).

Residues 1-111 (MFASRIRSRA…HRAGLVPMRF (111 aa)) constitute a mitochondrion transit peptide. Residues 23–50 (RLPASTTGRRYKSDETLNRVSSKITQPK) are disordered. The span at 40 to 50 (NRVSSKITQPK) shows a compositional bias: polar residues. Residue cysteine 86 participates in [2Fe-2S] cluster binding. Aspartate 118 contributes to the Mg(2+) binding site. Cysteine 159 serves as a coordination point for [2Fe-2S] cluster. Aspartate 160 lines the Mg(2+) pocket. Cysteine 232 contacts [2Fe-2S] cluster. Residue glutamate 485 coordinates Mg(2+). Serine 511 (proton acceptor) is an active-site residue.

It belongs to the IlvD/Edd family. [2Fe-2S] cluster is required as a cofactor. Requires Mg(2+) as cofactor.

The protein localises to the mitochondrion. The catalysed reaction is (2R)-2,3-dihydroxy-3-methylbutanoate = 3-methyl-2-oxobutanoate + H2O. It catalyses the reaction (2R,3R)-2,3-dihydroxy-3-methylpentanoate = (S)-3-methyl-2-oxopentanoate + H2O. Its pathway is amino-acid biosynthesis; L-isoleucine biosynthesis; L-isoleucine from 2-oxobutanoate: step 3/4. It functions in the pathway amino-acid biosynthesis; L-valine biosynthesis; L-valine from pyruvate: step 3/4. DHAD activity is not inhibited by the dihydroxyacid dehydratase inhibitor aspterric acid (AA). Functionally, dihydroxyacid dehydratase; part of the gene cluster that mediates the biosynthesis of the sesquiterpenoid aspterric acid (AA), an inhibitor of dihydroxy-acid dehydratase (DHAD) effective as an herbicide. Performs the third step in the common pathway leading to biosynthesis of branched-chain amino acids. Catalyzes the dehydration of (2R,3R)-2,3-dihydroxy-3-methylpentanoate (2,3-dihydroxy-3-methylvalerate) into 2-oxo-3-methylpentanoate (2-oxo-3-methylvalerate) and of (2R)-2,3-dihydroxy-3-methylbutanoate (2,3-dihydroxyisovalerate) into 2-oxo-3-methylbutanoate (2-oxoisovalerate), the penultimate precursor to L-isoleucine and L-valine, respectively. AstD confers self-resistance in the presence of the dihydroxyacid dehydratase inhibitor aspterric acid (AA) produced by the ast cluster. The sequence is that of Dihydroxy-acid dehydratase astD, mitochondrial from Aspergillus terreus (strain NIH 2624 / FGSC A1156).